We begin with the raw amino-acid sequence, 676 residues long: Envelope fusion protein (676 aa).

The signal sequence occupies residues 1–16 (MSPLALIVLLAWHATA). N-linked (GlcNAc...) asparagine; by host glycosylation is found at asparagine 76 and asparagine 87. Positions 169–215 (ARELHDLAKTSNALNEQIKEVTDELVNIAKFEEHKQCLERQRDDLCG) form a coiled coil. N-linked (GlcNAc...) asparagine; by host glycosylation is found at asparagine 266, asparagine 469, asparagine 505, and asparagine 548. A helical membrane pass occupies residues 577 to 597 (CATAEAVVACVVLFLVALLLF). N-linked (GlcNAc...) asparagine; by host glycosylation occurs at asparagine 628.

Post-translationally, N-glycosylated.

It localises to the virion membrane. The protein localises to the host cell membrane. Functionally, envelope glycoprotein which mediates the fusion of viral and host endosomal membranes leading to virus entry into the host cell. The chain is Envelope fusion protein from Lepidoptera (butterflies and moths).